The following is a 485-amino-acid chain: D-alanine--D-alanyl carrier protein ligase (485 aa).

Residue 144–145 (TS) coordinates ATP. Residue aspartate 189 coordinates D-alanine. 284-289 (NTYGPT) is a binding site for ATP. Valine 293 serves as a coordination point for D-alanine. ATP contacts are provided by aspartate 365 and lysine 473. Lysine 473 lines the D-alanine pocket.

This sequence belongs to the ATP-dependent AMP-binding enzyme family. DltA subfamily.

Its subcellular location is the cytoplasm. It catalyses the reaction holo-[D-alanyl-carrier protein] + D-alanine + ATP = D-alanyl-[D-alanyl-carrier protein] + AMP + diphosphate. The protein operates within cell wall biogenesis; lipoteichoic acid biosynthesis. In terms of biological role, catalyzes the first step in the D-alanylation of lipoteichoic acid (LTA), the activation of D-alanine and its transfer onto the D-alanyl carrier protein (Dcp) DltC. In an ATP-dependent two-step reaction, forms a high energy D-alanyl-AMP intermediate, followed by transfer of the D-alanyl residue as a thiol ester to the phosphopantheinyl prosthetic group of the Dcp. D-alanylation of LTA plays an important role in modulating the properties of the cell wall in Gram-positive bacteria, influencing the net charge of the cell wall. The sequence is that of D-alanine--D-alanyl carrier protein ligase from Staphylococcus haemolyticus (strain JCSC1435).